The following is a 357-amino-acid chain: Dual-specificity RNA methyltransferase RlmN (357 aa).

E89 acts as the Proton acceptor in catalysis. Residues E109–D340 enclose the Radical SAM core domain. The cysteines at positions 116 and 345 are disulfide-linked. [4Fe-4S] cluster contacts are provided by C123, C127, and C130. S-adenosyl-L-methionine is bound by residues G173–E174, S203, S226–H228, and N302. C345 (S-methylcysteine intermediate) is an active-site residue.

It belongs to the radical SAM superfamily. RlmN family. [4Fe-4S] cluster serves as cofactor.

It localises to the cytoplasm. It catalyses the reaction adenosine(2503) in 23S rRNA + 2 reduced [2Fe-2S]-[ferredoxin] + 2 S-adenosyl-L-methionine = 2-methyladenosine(2503) in 23S rRNA + 5'-deoxyadenosine + L-methionine + 2 oxidized [2Fe-2S]-[ferredoxin] + S-adenosyl-L-homocysteine. The catalysed reaction is adenosine(37) in tRNA + 2 reduced [2Fe-2S]-[ferredoxin] + 2 S-adenosyl-L-methionine = 2-methyladenosine(37) in tRNA + 5'-deoxyadenosine + L-methionine + 2 oxidized [2Fe-2S]-[ferredoxin] + S-adenosyl-L-homocysteine. Specifically methylates position 2 of adenine 2503 in 23S rRNA and position 2 of adenine 37 in tRNAs. m2A2503 modification seems to play a crucial role in the proofreading step occurring at the peptidyl transferase center and thus would serve to optimize ribosomal fidelity. The polypeptide is Dual-specificity RNA methyltransferase RlmN (Helicobacter pylori (strain G27)).